The chain runs to 463 residues: Trigger factor (463 aa).

Residues 162 to 243 enclose the PPIase FKBP-type domain; that stretch reads GDVVTLDLEA…VSQVAARELP (82 aa). The segment at 427–463 is disordered; sequence TNGEIVDLDDEDETESTPETTEAAEAAEESTEDKPEA. Residues 432 to 442 show a composition bias toward acidic residues; sequence VDLDDEDETES.

The protein belongs to the FKBP-type PPIase family. Tig subfamily.

The protein localises to the cytoplasm. It catalyses the reaction [protein]-peptidylproline (omega=180) = [protein]-peptidylproline (omega=0). In terms of biological role, involved in protein export. Acts as a chaperone by maintaining the newly synthesized protein in an open conformation. Functions as a peptidyl-prolyl cis-trans isomerase. The protein is Trigger factor of Streptomyces avermitilis (strain ATCC 31267 / DSM 46492 / JCM 5070 / NBRC 14893 / NCIMB 12804 / NRRL 8165 / MA-4680).